Consider the following 256-residue polypeptide: uncharacterized protein (256 aa).

The region spanning 10 to 64 is the HTH cro/C1-type domain; sequence IRALRESRDWSLADLAAATGVSTMGLSYLERGARKPHKSTVQKVENGLGLPPGTY. The segment at residues 21 to 40 is a DNA-binding region (H-T-H motif); it reads LADLAAATGVSTMGLSYLER.

This is an uncharacterized protein from Mycobacterium bovis (strain ATCC BAA-935 / AF2122/97).